Consider the following 178-residue polypeptide: NADPH azoreductase (178 aa).

106-111 provides a ligand contact to NADP(+); it reads GGGKGG.

This sequence belongs to the azoreductase type 2 family. Monomer.

It catalyses the reaction N,N-dimethyl-1,4-phenylenediamine + aniline + 2 NADP(+) = 4-(dimethylamino)azobenzene + 2 NADPH + 2 H(+). In terms of biological role, catalyzes the reductive cleavage of azo bond in aromatic azo compounds to the corresponding amines. Requires NADPH as an electron donor for its activity. Compounds with paired naphthalene groups coupled with the azo group are good substrates, with the following preference order: Rocceline &gt; Sumifix Black B &gt; Solar Orange. The polypeptide is NADPH azoreductase (azr) (Bacillus sp. (strain OY1-2)).